A 207-amino-acid polypeptide reads, in one-letter code: Abscisic acid receptor PYL9 (207 aa).

Positions 31-197 are START-like; that stretch reads FPPSTTTATT…NLQMLAAVAE (167 aa). Residues Lys-74, 104-109, 131-137, and Glu-162 each bind abscisate; these read ASTSTE and RLRNYRS. Positions 100–104 match the Gate loop motif; it reads SGLPA. Residues 130–132 carry the Latch loop motif; it reads HRL.

The protein belongs to the PYR/PYL/RCAR abscisic acid intracellular receptor family. Homodimer. Interacts with PP2C06. Interacts with PP2C50. Binding to PP2C50 is dependent on the presence of abscisic acid (ABA). Interacts with PP2C30 and PP2C53. Binding to PP2C30 and PP2C53 is dependent on the presence of ABA.

Its subcellular location is the cytoplasm. The protein resides in the cytosol. The protein localises to the nucleus. Involved in abscisic acid (ABA) signaling during seed germination and abiotic stress response. Acts as a positive regulator of ABA-mediated inhibition of seed germination, and tolerance to drought and cold stresses. Inhibits the activity of the protein phosphatases PP2C06 and PP2C09 when activated by abscisic acid (ABA). The protein is Abscisic acid receptor PYL9 of Oryza sativa subsp. japonica (Rice).